Here is a 476-residue protein sequence, read N- to C-terminus: FAD-dependent monooxygenase dpasE (476 aa).

Positions 1–21 are cleaved as a signal peptide; that stretch reads MSQPAFKIIIVGCSVTGLTLA. FAD contacts are provided by Glu35, Ala49, and Arg109. N-linked (GlcNAc...) asparagine glycans are attached at residues Asn190 and Asn219. Residues Asp308 and Ala321 each contribute to the FAD site. The chain crosses the membrane as a helical span at residues 441–461; sequence GAGFWITAFLSLSLLAVAATM.

The protein belongs to the paxM FAD-dependent monooxygenase family. FAD is required as a cofactor.

Its subcellular location is the membrane. It participates in secondary metabolite biosynthesis; terpenoid biosynthesis. Functionally, FAD-dependent monooxygenase; part of the gene cluster that mediates the biosynthesis of the diterpenoid pyrones subglutinols A and B. The first step of the pathway is the synthesis of the alpha-pyrone moiety by the polyketide synthase dpasA via condensation of one acetyl-CoA starter unit with 3 malonyl-CoA units and 2 methylations. The alpha-pyrone is then combined with geranylgeranyl pyrophosphate (GGPP) formed by the GGPP synthase dpasD through the action of the prenyltransferase dpasC to yield a linear alpha-pyrone diterpenoid. Subsequent steps in the diterpenoid pyrone biosynthetic pathway involve the decalin core formation, which is initiated by the epoxidation of the C10-C11 olefin by the FAD-dependent oxidoreductase dpasE, and is followed by a cyclization cascade catalyzed by the terpene cyclase dpasB. The FAD-linked oxidoreductase dpasF is then involved in tetrahydrofuran (THF) ring formation at the C5 unit to complete the formation of subglutinols A and B. DpasF possesses also an additional catalytic ability of multi-step oxidations to generate a new DDP analog with an enone system at the C5 named FDDP A. The sequence is that of FAD-dependent monooxygenase dpasE from Apiospora sacchari (Arthrinium sacchari).